Consider the following 146-residue polypeptide: Large ribosomal subunit protein uL15 (146 aa).

Basic and acidic residues predominate over residues 1–13 (MKLHELKPAEGSR). The segment at 1–47 (MKLHELKPAEGSRKSRKRIGRGTGSGLGRNAGKGEKGQKARAGGGVR) is disordered. Over residues 21–31 (RGTGSGLGRNA) the composition is skewed to gly residues.

This sequence belongs to the universal ribosomal protein uL15 family. As to quaternary structure, part of the 50S ribosomal subunit.

Functionally, binds to the 23S rRNA. The protein is Large ribosomal subunit protein uL15 of Clostridium kluyveri (strain NBRC 12016).